The primary structure comprises 86 residues: MNYLVMISLALLFMIGVESARDGYIAQPNNCVYHCIPLSPGCDKLCRENGATSGKCSFLAGSGLACWCVALPDNVPIKIIGQKCTR.

Positions 1–19 (MNYLVMISLALLFMIGVES) are cleaved as a signal peptide. In terms of domain architecture, LCN-type CS-alpha/beta spans 21-85 (RDGYIAQPNN…PIKIIGQKCT (65 aa)). Cystine bridges form between Cys31/Cys84, Cys35/Cys56, Cys42/Cys66, and Cys46/Cys68.

Belongs to the long (4 C-C) scorpion toxin superfamily. Sodium channel inhibitor family. Alpha subfamily. Post-translationally, the C-terminal basic residue is removed by a carboxypeptidase. As to expression, expressed by the venom gland.

Its subcellular location is the secreted. Its function is as follows. Alpha toxins bind voltage-independently at site-3 of sodium channels (Nav) and inhibit the inactivation of the activated channels, thereby blocking neuronal transmission. In Androctonus amoreuxi (African fattail scorpion), this protein is Toxin Aam3.